The chain runs to 760 residues: Colleterpenol synthase (760 aa).

The terpene cyclase stretch occupies residues 14–335 (ASSGLRSKFR…YTRRYPSKAD (322 aa)). Residue Asp-95 participates in Mg(2+) binding. The DDXXD 1 motif lies at 95 to 99 (DDYYD). The NSE/DTE motif lies at 233–241 (NDLYSWPKE). Positions 336-759 (LRQPEVEFVD…LELVLRRLWI (424 aa)) are prenyltransferase. Residues 359-400 (EEKVVSESVESLPTTEVEDEFSSSDASPGSVDQAISTPPSTT) form a disordered region. Residues 391–400 (QAISTPPSTT) show a composition bias toward polar residues. Isopentenyl diphosphate is bound by residues Lys-477, Arg-480, and His-509. Residues Asp-516 and Asp-520 each coordinate Mg(2+). Positions 516–520 (DDIED) match the DDXXD 2 motif. Arg-525 provides a ligand contact to dimethylallyl diphosphate. Residue Arg-526 coordinates isopentenyl diphosphate. Dimethylallyl diphosphate contacts are provided by Lys-605, Thr-606, Gln-643, Asn-650, Lys-660, and Lys-670.

In the N-terminal section; belongs to the terpene synthase family. The protein in the C-terminal section; belongs to the FPP/GGPP synthase family. As to quaternary structure, hexamer. Requires Mg(2+) as cofactor.

It carries out the reaction 5 isopentenyl diphosphate + dimethylallyl diphosphate = all-trans-hexaprenyl diphosphate + 5 diphosphate. The catalysed reaction is all-trans-hexaprenyl diphosphate + H2O = colleterpenol + diphosphate. In terms of biological role, bifunctional terpene synthase that converts dimethylallyl diphosphate (DMAPP) and isopentenyl diphosphate (IPP) into colleterpenol as a single product. The C-terminal prenyltransferase (PT) domain of CgCS catalyzes formation of hexaprenyl diphosphate (HexPP), whereas the N-terminal terpene cyclase (TC) domain catalyzes the cyclization of HexPP to colleterpenol. The sequence is that of Colleterpenol synthase from Colletotrichum gloeosporioides (Anthracnose fungus).